The sequence spans 558 residues: Formate--tetrahydrofolate ligase (558 aa).

Residue 66 to 73 (TPAGEGKT) participates in ATP binding.

Belongs to the formate--tetrahydrofolate ligase family.

The catalysed reaction is (6S)-5,6,7,8-tetrahydrofolate + formate + ATP = (6R)-10-formyltetrahydrofolate + ADP + phosphate. Its pathway is one-carbon metabolism; tetrahydrofolate interconversion. This chain is Formate--tetrahydrofolate ligase, found in Neisseria meningitidis serogroup C / serotype 2a (strain ATCC 700532 / DSM 15464 / FAM18).